The chain runs to 269 residues: 1-(5-phosphoribosyl)-5-[(5-phosphoribosylamino)methylideneamino] imidazole-4-carboxamide isomerase (269 aa).

D10 functions as the Proton acceptor in the catalytic mechanism. The Proton donor role is filled by D132.

This sequence belongs to the HisA/HisF family.

It localises to the cytoplasm. It catalyses the reaction 1-(5-phospho-beta-D-ribosyl)-5-[(5-phospho-beta-D-ribosylamino)methylideneamino]imidazole-4-carboxamide = 5-[(5-phospho-1-deoxy-D-ribulos-1-ylimino)methylamino]-1-(5-phospho-beta-D-ribosyl)imidazole-4-carboxamide. It functions in the pathway amino-acid biosynthesis; L-histidine biosynthesis; L-histidine from 5-phospho-alpha-D-ribose 1-diphosphate: step 4/9. This is 1-(5-phosphoribosyl)-5-[(5-phosphoribosylamino)methylideneamino] imidazole-4-carboxamide isomerase from Xylella fastidiosa (strain Temecula1 / ATCC 700964).